Here is a 307-residue protein sequence, read N- to C-terminus: Ornithine carbamoyltransferase (307 aa).

Carbamoyl phosphate contacts are provided by residues 50 to 53, Gln-77, Arg-101, and 128 to 131; these read STRT and HPCQ. L-ornithine-binding positions include Asn-160, Asp-224, and 228–229; that span reads SM. Residues 264–265 and Arg-292 each bind carbamoyl phosphate; that span reads CL.

This sequence belongs to the aspartate/ornithine carbamoyltransferase superfamily. OTCase family. Homotrimer.

Its subcellular location is the cytoplasm. The catalysed reaction is carbamoyl phosphate + L-ornithine = L-citrulline + phosphate + H(+). It participates in amino-acid biosynthesis; L-arginine biosynthesis; L-arginine from L-ornithine and carbamoyl phosphate: step 1/3. In terms of biological role, reversibly catalyzes the transfer of the carbamoyl group from carbamoyl phosphate (CP) to the N(epsilon) atom of ornithine (ORN) to produce L-citrulline, which is a substrate for argininosuccinate synthetase, the enzyme involved in the final step in arginine biosynthesis. This chain is Ornithine carbamoyltransferase (argF), found in Mycobacterium bovis (strain ATCC BAA-935 / AF2122/97).